A 370-amino-acid polypeptide reads, in one-letter code: Phospho-2-dehydro-3-deoxyheptonate aldolase, tyrosine-inhibited (370 aa).

It belongs to the class-I DAHP synthase family.

It carries out the reaction D-erythrose 4-phosphate + phosphoenolpyruvate + H2O = 7-phospho-2-dehydro-3-deoxy-D-arabino-heptonate + phosphate. Its pathway is metabolic intermediate biosynthesis; chorismate biosynthesis; chorismate from D-erythrose 4-phosphate and phosphoenolpyruvate: step 1/7. Its activity is regulated as follows. Inhibited by tyrosine. Its function is as follows. Stereospecific condensation of phosphoenolpyruvate (PEP) and D-erythrose-4-phosphate (E4P) giving rise to 3-deoxy-D-arabino-heptulosonate-7-phosphate (DAHP). The sequence is that of Phospho-2-dehydro-3-deoxyheptonate aldolase, tyrosine-inhibited (ARO4) from Candida albicans (strain SC5314 / ATCC MYA-2876) (Yeast).